Here is a 241-residue protein sequence, read N- to C-terminus: Homeobox protein TGIF2LX (241 aa).

2 disordered regions span residues 1–58 (MEAA…GNLP) and 126–209 (TGKD…VSPE). Polar residues predominate over residues 21-39 (AKTQSPAQDTSIMSRNNAD). The homeobox; TALE-type DNA-binding region spans 48–111 (EHKKKRKGNL…INARRRILPD (64 aa)).

Belongs to the TALE/TGIF homeobox family.

The protein localises to the nucleus. Functionally, may have a transcription role in testis. In Gorilla gorilla gorilla (Western lowland gorilla), this protein is Homeobox protein TGIF2LX (TGIF2LX).